A 119-amino-acid chain; its full sequence is ATP-dependent Clp protease adapter protein ClpS (119 aa).

It belongs to the ClpS family. As to quaternary structure, binds to the N-terminal domain of the chaperone ClpA.

Involved in the modulation of the specificity of the ClpAP-mediated ATP-dependent protein degradation. The protein is ATP-dependent Clp protease adapter protein ClpS of Marinobacter nauticus (strain ATCC 700491 / DSM 11845 / VT8) (Marinobacter aquaeolei).